The primary structure comprises 601 residues: Elongation factor 4 (601 aa).

Residues 8-189 (EQIRNFGIIA…LIVRKAPPPK (182 aa)) enclose the tr-type G domain. 20–25 (DHGKST) serves as a coordination point for GTP.

The protein belongs to the TRAFAC class translation factor GTPase superfamily. Classic translation factor GTPase family. LepA subfamily.

It localises to the cell membrane. It carries out the reaction GTP + H2O = GDP + phosphate + H(+). Required for accurate and efficient protein synthesis under certain stress conditions. May act as a fidelity factor of the translation reaction, by catalyzing a one-codon backward translocation of tRNAs on improperly translocated ribosomes. Back-translocation proceeds from a post-translocation (POST) complex to a pre-translocation (PRE) complex, thus giving elongation factor G a second chance to translocate the tRNAs correctly. Binds to ribosomes in a GTP-dependent manner. The sequence is that of Elongation factor 4 from Tropheryma whipplei (strain Twist) (Whipple's bacillus).